The chain runs to 131 residues: Small ribosomal subunit protein uS8 (131 aa).

The protein belongs to the universal ribosomal protein uS8 family. As to quaternary structure, part of the 30S ribosomal subunit. Contacts proteins S5 and S12.

In terms of biological role, one of the primary rRNA binding proteins, it binds directly to 16S rRNA central domain where it helps coordinate assembly of the platform of the 30S subunit. The sequence is that of Small ribosomal subunit protein uS8 from Porphyromonas gingivalis (strain ATCC 33277 / DSM 20709 / CIP 103683 / JCM 12257 / NCTC 11834 / 2561).